The sequence spans 493 residues: Transcript termination protein A18 (493 aa).

Positions 100-256 (MIESKRPLYI…NSIINIAKLS (157 aa)) constitute a Helicase ATP-binding domain. 113-120 (LACGFGKT) contacts ATP. The DESH box signature appears at 206–209 (DESH).

The protein belongs to the helicase family. Poxviruses subfamily. In terms of assembly, interacts with G2. Might be part of a transcription complex composed at least of G2, A18, and H5.

Its subcellular location is the virion. In terms of biological role, DNA helicase which seems to act as a postreplicative transcription termination factor. Involved in ATP-dependent release of nascent RNA. Forms a stable complex with single-stranded DNA, and to a lesser extent RNA. This is Transcript termination protein A18 from Rabbitpox virus (strain Utrecht) (RPV).